The chain runs to 2209 residues: Genome polyprotein (2209 aa).

The N-myristoyl glycine; by host moiety is linked to residue Gly-2. The Cytoplasmic segment spans residues 2–1520; that stretch reads GAQVSSQKVG…NINRAMTILQ (1519 aa). Residues 580-600 are amphipathic alpha-helix; that stretch reads GLGQMLESMIDNTVRETVGAA. The disordered stretch occupies residues 599–619; sequence AATSRDALPNTEASGPTHSKE. Catalysis depends on for protease 2A activity residues His-901 and Asp-919. Residues Cys-936 and Cys-938 each contribute to the Zn(2+) site. The active-site For protease 2A activity is the Cys-990. 2 residues coordinate Zn(2+): Cys-996 and His-998. Residues 1128-1200 are membrane-binding; the sequence is GDSWLKKFTE…HQSCPSQEHQ (73 aa). Positions 1128 to 1266 are oligomerization; it reads GDSWLKKFTE…SPGTGKSVAT (139 aa). Positions 1149–1153 are RNA-binding; that stretch reads SNKIS. Residues 1232–1388 form the SF3 helicase domain; it reads EHTINNYIQF…NEYSRDGKLN (157 aa). 1256–1263 contacts ATP; that stretch reads GSPGTGKS. Cys-1396, Cys-1399, Cys-1408, and Cys-1413 together coordinate Zn(2+). A C4-type zinc finger spans residues 1396–1413; it reads CKNCHQPANFKRCCPLVC. An RNA-binding region spans residues 1440–1447; it reads ERNRRSNI. An oligomerization region spans residues 1451 to 1456; the sequence is MEALFQ. The stretch at 1521 to 1536 is an intramembrane region; sequence AVTTFAAVAGVVYVMY. Residues 1537–2209 are Cytoplasmic-facing; sequence KLFAGHQGAY…TLYRRWLDSF (673 aa). Tyr-1546 is subject to O-(5'-phospho-RNA)-tyrosine. Tyr-1546 bears the O-UMP-tyrosine; transient mark. One can recognise a Peptidase C3 domain in the interval 1566 to 1744; it reads GPGFDYAVAM…FAAALKRSYF (179 aa). Active-site for protease 3C activity residues include His-1605, Glu-1636, and Cys-1712. The region spanning 1975–2090 is the RdRp catalytic domain; that stretch reads EKLFAFDYTG…SYPHEVDASL (116 aa). Residues Asp-1981 and Asp-2076 each contribute to the Mg(2+) site.

Belongs to the picornaviruses polyprotein family. In terms of assembly, interacts with capsid protein VP1 and capsid protein VP3 to form heterotrimeric protomers. Interacts with capsid protein VP0, and capsid protein VP3 to form heterotrimeric protomers. Five protomers subsequently associate to form pentamers which serve as building blocks for the capsid. Interacts with capsid protein VP2, capsid protein VP3 and capsid protein VP4 following cleavage of capsid protein VP0. Interacts with human PVR. As to quaternary structure, interacts with capsid protein VP1 and capsid protein VP3 in the mature capsid. In terms of assembly, interacts with capsid protein VP0 and capsid protein VP1 to form heterotrimeric protomers. Five protomers subsequently associate to form pentamers which serve as building blocks for the capsid. Interacts with capsid protein VP4 in the mature capsid. Interacts with protein 2C; this interaction may be important for virion morphogenesis. Interacts with capsid protein VP1 and capsid protein VP3. As to quaternary structure, homodimer. In terms of assembly, homohexamer; forms a hexameric ring structure with 6-fold symmetry characteristic of AAA+ ATPases. Interacts (via N-terminus) with host RTN3 (via reticulon domain); this interaction is important for viral replication. Interacts with capsid protein VP3; this interaction may be important for virion morphogenesis. Interacts with protein 3CD. As to quaternary structure, homodimer. Interacts with host GBF1. Interacts (via GOLD domain) with host ACBD3 (via GOLD domain); this interaction allows the formation of a viral protein 3A/ACBD3 heterotetramer with a 2:2 stoichiometry, which will stimulate the recruitment of host PI4KB in order to synthesize PI4P at the viral RNA replication sites. In terms of assembly, interacts with RNA-directed RNA polymerase. Interacts with protein 3AB and with RNA-directed RNA polymerase. As to quaternary structure, interacts with Viral protein genome-linked and with protein 3CD. It depends on Mg(2+) as a cofactor. Specific enzymatic cleavages in vivo by the viral proteases yield processing intermediates and the mature proteins. In terms of processing, myristoylation is required for the formation of pentamers during virus assembly. Further assembly of 12 pentamers and a molecule of genomic RNA generates the provirion. Post-translationally, during virion maturation, immature virions are rendered infectious following cleavage of VP0 into VP4 and VP2. This maturation seems to be an autocatalytic event triggered by the presence of RNA in the capsid and it is followed by a conformational change infectious virion. Myristoylation is required during RNA encapsidation and formation of the mature virus particle. In terms of processing, VPg is uridylylated by the polymerase into VPg-pUpU. This acts as a nucleotide-peptide primer for the genomic RNA replication.

It is found in the virion. Its subcellular location is the host cytoplasm. The protein localises to the host cytoplasmic vesicle membrane. It localises to the host nucleus. The catalysed reaction is RNA(n) + a ribonucleoside 5'-triphosphate = RNA(n+1) + diphosphate. It carries out the reaction Selective cleavage of Tyr-|-Gly bond in the picornavirus polyprotein.. The enzyme catalyses a ribonucleoside 5'-triphosphate + H2O = a ribonucleoside 5'-diphosphate + phosphate + H(+). It catalyses the reaction Selective cleavage of Gln-|-Gly bond in the poliovirus polyprotein. In other picornavirus reactions Glu may be substituted for Gln, and Ser or Thr for Gly.. Replication or transcription is subject to high level of random mutations by the nucleotide analog ribavirin. In terms of biological role, forms an icosahedral capsid of pseudo T=3 symmetry with capsid proteins VP2 and VP3. The capsid is 300 Angstroms in diameter, composed of 60 copies of each capsid protein and enclosing the viral positive strand RNA genome. Capsid protein VP1 mainly forms the vertices of the capsid. Capsid protein VP1 interacts with host cell receptor PVR to provide virion attachment to target host epithelial cells. This attachment induces virion internalization predominantly through clathrin- and caveolin-independent endocytosis in Hela cells and through caveolin-mediated endocytosis in brain microvascular endothelial cells. Tyrosine kinases are probably involved in the entry process. Virus binding to PVR induces increased junctional permeability and rearrangement of junctional proteins. Modulation of endothelial tight junctions, as well as cytolytic infection of endothelial cells themselves, may result in loss of endothelial integrity which may help the virus to reach the CNS. After binding to its receptor, the capsid undergoes conformational changes. Capsid protein VP1 N-terminus (that contains an amphipathic alpha-helix) and capsid protein VP4 are externalized. Together, they shape a pore in the host membrane through which viral genome is translocated to host cell cytoplasm. Functionally, forms an icosahedral capsid of pseudo T=3 symmetry with capsid proteins VP1 and VP3. The capsid is 300 Angstroms in diameter, composed of 60 copies of each capsid protein and enclosing the viral positive strand RNA genome. Forms an icosahedral capsid of pseudo T=3 symmetry with capsid proteins VP2 and VP1. The capsid is 300 Angstroms in diameter, composed of 60 copies of each capsid protein and enclosing the viral positive strand RNA genome. Its function is as follows. Lies on the inner surface of the capsid shell. After binding to the host receptor, the capsid undergoes conformational changes. Capsid protein VP4 is released, Capsid protein VP1 N-terminus is externalized, and together, they shape a pore in the host membrane through which the viral genome is translocated into the host cell cytoplasm. In terms of biological role, component of immature procapsids, which is cleaved into capsid proteins VP4 and VP2 after maturation. Allows the capsid to remain inactive before the maturation step. Functionally, cysteine protease that cleaves viral polyprotein and specific host proteins. It is responsible for the autocatalytic cleavage between the P1 and P2 regions, which is the first cleavage occurring in the polyprotein. Also cleaves the host translation initiation factor EIF4G1, in order to shut down the capped cellular mRNA translation. Inhibits the host nucleus-cytoplasm protein and RNA trafficking by cleaving host members of the nuclear pores including NUP98, NUP62 and NUP153. Counteracts stress granule formation probably by antagonizing its assembly or promoting its dissassembly. Cleaves and inhibits host IFIH1/MDA5, thereby inhibiting the type-I IFN production and the establishment of the antiviral state. Cleaves and inhibits host MAVS, thereby inhibiting the type-I IFN production and the establishment of the antiviral state. Plays an essential role in the virus replication cycle by acting as a viroporin. Creates a pore in the host endoplasmic reticulum and as a consequence releases Ca2+ in the cytoplasm of infected cell. In turn, high levels of cytoplasmic calcium may trigger membrane trafficking and transport of viral ER-associated proteins to viroplasms, sites of viral genome replication. Its function is as follows. Induces and associates with structural rearrangements of intracellular membranes. Displays RNA-binding, nucleotide binding and NTPase activities. May play a role in virion morphogenesis and viral RNA encapsidation by interacting with the capsid protein VP3. In terms of biological role, localizes the viral replication complex to the surface of membranous vesicles. Together with protein 3CD binds the Cis-Active RNA Element (CRE) which is involved in RNA synthesis initiation. Acts as a cofactor to stimulate the activity of 3D polymerase, maybe through a nucleid acid chaperone activity. Functionally, localizes the viral replication complex to the surface of membranous vesicles. It inhibits host cell endoplasmic reticulum-to-Golgi apparatus transport and causes the disassembly of the Golgi complex, possibly through GBF1 interaction. This would result in depletion of MHC, trail receptors and IFN receptors at the host cell surface. Plays an essential role in viral RNA replication by recruiting ACBD3 and PI4KB at the viral replication sites, thereby allowing the formation of the rearranged membranous structures where viral replication takes place. Acts as a primer for viral RNA replication and remains covalently bound to viral genomic RNA. VPg is uridylylated prior to priming replication into VPg-pUpU. The oriI viral genomic sequence may act as a template for this. The VPg-pUpU is then used as primer on the genomic RNA poly(A) by the RNA-dependent RNA polymerase to replicate the viral genome. During genome replication, the VPg-RNA linkage is removed by the host TDP2, thereby accelerating replication. During the late stage of the replication cycle, host TDP2 is excluded from sites of viral RNA synthesis and encapsidation, allowing for the generation of progeny virions. Its function is as follows. Involved in the viral replication complex and viral polypeptide maturation. It exhibits protease activity with a specificity and catalytic efficiency that is different from protease 3C. Protein 3CD binds to the 5'UTR of the viral genome. In terms of biological role, major viral protease that mediates proteolytic processing of the polyprotein. Cleaves host EIF5B, contributing to host translation shutoff. Cleaves also host PABPC1, contributing to host translation shutoff. Cleaves host RIGI and thus contributes to the inhibition of type I interferon production. Cleaves host NLRP1, triggers host N-glycine-mediated degradation of the autoinhibitory NLRP1 N-terminal fragment. Inhibits the integrated stress response (ISR) in the infected cell by cleaving host G3BP1. Stress granule formation is thus inhibited, which allows protein synthesis and viral replication. Functionally, replicates the viral genomic RNA on the surface of intracellular membranes. May form linear arrays of subunits that propagate along a strong head-to-tail interaction called interface-I. Covalently attaches UMP to a tyrosine of VPg, which is used to prime RNA synthesis. The positive stranded RNA genome is first replicated at virus induced membranous vesicles, creating a dsRNA genomic replication form. This dsRNA is then used as template to synthesize positive stranded RNA genomes. ss(+)RNA genomes are either translated, replicated or encapsidated. This chain is Genome polyprotein, found in Homo sapiens (Human).